Consider the following 288-residue polypeptide: ATP synthase subunit a (288 aa).

The next 6 membrane-spanning stretches (helical) occupy residues 47–67 (LDSMLWSIGLGIVFCAIFWMV), 104–124 (LIAPLALTIFVWIFLMNLMDL), 157–177 (DPNITLGMSFSVFILILFYSI), 199–219 (PIVQIILIPINFILEFVTLIA), 237–257 (LIFILIALMPFWIQWALSVPW), and 258–278 (AIFHILIITLQAFVFMMLTIV).

This sequence belongs to the ATPase A chain family. In terms of assembly, F-type ATPases have 2 components, CF(1) - the catalytic core - and CF(0) - the membrane proton channel. CF(1) has five subunits: alpha(3), beta(3), gamma(1), delta(1), epsilon(1). CF(0) has three main subunits: a(1), b(2) and c(9-12). The alpha and beta chains form an alternating ring which encloses part of the gamma chain. CF(1) is attached to CF(0) by a central stalk formed by the gamma and epsilon chains, while a peripheral stalk is formed by the delta and b chains.

The protein resides in the cell inner membrane. Functionally, key component of the proton channel; it plays a direct role in the translocation of protons across the membrane. The sequence is that of ATP synthase subunit a from Psychrobacter arcticus (strain DSM 17307 / VKM B-2377 / 273-4).